A 459-amino-acid polypeptide reads, in one-letter code: tRNA modification GTPase MnmE (459 aa).

Positions 20, 85, and 124 each coordinate (6S)-5-formyl-5,6,7,8-tetrahydrofolate. Residues 221-380 (GISTVIIGRP…LEEAIQSLFF (160 aa)) form the TrmE-type G domain. N231 provides a ligand contact to K(+). GTP-binding positions include 231 to 236 (NVGKSS), 250 to 256 (TDIPGTT), and 275 to 278 (DTAG). Residue S235 coordinates Mg(2+). 3 residues coordinate K(+): T250, I252, and T255. Mg(2+) is bound at residue T256. Position 459 (K459) interacts with (6S)-5-formyl-5,6,7,8-tetrahydrofolate.

It belongs to the TRAFAC class TrmE-Era-EngA-EngB-Septin-like GTPase superfamily. TrmE GTPase family. In terms of assembly, homodimer. Heterotetramer of two MnmE and two MnmG subunits. K(+) serves as cofactor.

The protein localises to the cytoplasm. Its function is as follows. Exhibits a very high intrinsic GTPase hydrolysis rate. Involved in the addition of a carboxymethylaminomethyl (cmnm) group at the wobble position (U34) of certain tRNAs, forming tRNA-cmnm(5)s(2)U34. The protein is tRNA modification GTPase MnmE of Bacillus licheniformis (strain ATCC 14580 / DSM 13 / JCM 2505 / CCUG 7422 / NBRC 12200 / NCIMB 9375 / NCTC 10341 / NRRL NRS-1264 / Gibson 46).